The following is a 330-amino-acid chain: Succinylglutamate desuccinylase (330 aa).

Zn(2+) is bound by residues H53, E56, and H147. The active site involves E210.

It belongs to the AspA/AstE family. Succinylglutamate desuccinylase subfamily. Zn(2+) is required as a cofactor.

The enzyme catalyses N-succinyl-L-glutamate + H2O = L-glutamate + succinate. Its pathway is amino-acid degradation; L-arginine degradation via AST pathway; L-glutamate and succinate from L-arginine: step 5/5. Its function is as follows. Transforms N(2)-succinylglutamate into succinate and glutamate. The polypeptide is Succinylglutamate desuccinylase (Yersinia pseudotuberculosis serotype O:3 (strain YPIII)).